The chain runs to 209 residues: Uracil phosphoribosyltransferase (209 aa).

Residues arginine 79, arginine 104, and 131-139 (DPMLATGNS) each bind 5-phospho-alpha-D-ribose 1-diphosphate. Residues isoleucine 194 and 199–201 (GDA) each bind uracil. Aspartate 200 provides a ligand contact to 5-phospho-alpha-D-ribose 1-diphosphate.

It belongs to the UPRTase family. Mg(2+) serves as cofactor.

It carries out the reaction UMP + diphosphate = 5-phospho-alpha-D-ribose 1-diphosphate + uracil. The protein operates within pyrimidine metabolism; UMP biosynthesis via salvage pathway; UMP from uracil: step 1/1. With respect to regulation, allosterically activated by GTP. Functionally, catalyzes the conversion of uracil and 5-phospho-alpha-D-ribose 1-diphosphate (PRPP) to UMP and diphosphate. This chain is Uracil phosphoribosyltransferase, found in Variovorax paradoxus (strain S110).